A 336-amino-acid polypeptide reads, in one-letter code: Aspartate--ammonia ligase (336 aa).

It belongs to the class-II aminoacyl-tRNA synthetase family. AsnA subfamily.

The protein localises to the cytoplasm. The enzyme catalyses L-aspartate + NH4(+) + ATP = L-asparagine + AMP + diphosphate + H(+). The protein operates within amino-acid biosynthesis; L-asparagine biosynthesis; L-asparagine from L-aspartate (ammonia route): step 1/1. The sequence is that of Aspartate--ammonia ligase from Clostridium perfringens (strain 13 / Type A).